The primary structure comprises 135 residues: Evasin P1134 (135 aa).

The first 31 residues, 1–31 (MEVKTFAFLQIAVFIALGIQIFAAVTAAADA), serve as a signal peptide directing secretion. 3 disulfide bridges follow: Cys-41/Cys-63, Cys-45/Cys-65, and Cys-56/Cys-76. N-linked (GlcNAc...) asparagine glycosylation is present at Asn-44. The tract at residues 88–112 (ETPSNSDLEAATPRPRKTLYPVRNP) is disordered.

The protein resides in the secreted. Functionally, salivary chemokine-binding protein which binds to host chemokine CXCL1. The sequence is that of Evasin P1134 from Ixodes ricinus (Common tick).